A 947-amino-acid polypeptide reads, in one-letter code: MLQRAASNAYSWWWASHIRTKQSKWLEQNLQDIEEKVQYVLKLLQEDGDSFAKRAEMYYKKRPELISFVEESYRAYRALAERYDHISTELQNANTTIASVFPDQVPNFAMDDDIDMSKFAKRSNISGANVPNVPKLPVKDLKSAVRVATKKLQPRKSMKYTGGSTNVVVKSSGLSKPEAMGEIDKLQKEILALQTEKEFVKSSYEIGLSKYWEFEKGIKEKQERICGLQDEFGESVAIEDEEARRLMTETAIKSCQEKLVELQEKQEKSYEEAREEHVKIKESKEKLRSMASQFLGDESVFAKDDGDEVRRTAELDHEIKEMSRKKKELESVKEKIREHFESGANSSLNGTDMAEKVDELVNKVISLESAVSSQTALIQRLRNETNGLQTQISTLETDKALLADDKSDLRNKLKEMEEKLKALQDLDRNVLDKSSNLQTHFDDACHNLDNLSGGNLHEVKPESESDNLAISIEPQKDLEGEKRTLDISEEIKEHQKETGEEKKEAPVKSVKFEQTRNATIAEDSTIPSTNPDTVLESTEKVDSDLEKQDASDKTDSVLDNVLENQAASDQTDSVLDSVLEKQGESDKIDSVPSNVSEKESDISFNGEQQEDQKEKEGEPDWKEMFMKGMENREKHLLTEYTTILRNFKDMKKTLDETKTKMKTENATKDDEIKLLREKMSLLQKGLGDSNDLMENQLSNDDYSIGFMAAENQNMSLVEEQFRLNIDELLEENLDFWLRFSTAFGQIQSYDTSIEDLQAEISKLEQRRKQDGSSTAKYALRSDVRPLYVHLREINTDLGLWLEKGAALKEELKSRFESLCNIQDEITKALKSSAEDDDFRFTSYQAAKFQGEVLNMKQENNKVADELQAGLDHITTLQLEVDKTLGKLIDEFALSGSKNKSDLDLQHSDSRSRVPLRSFIFGSKQKRAKPSIFSCMHPSLYRKMKTST.

An NAB domain is found at 10–90 (YSWWWASHIR…ERYDHISTEL (81 aa)). Coiled-coil stretches lie at residues 176-205 (KPEAMGEIDKLQKEILALQTEKEFVKSSYE), 247-342 (MTET…HFES), and 375-433 (TALI…VLDK). 2 disordered regions span residues 455-555 (NLHE…DKTD) and 580-620 (EKQG…GEPD). Residues 474-514 (PQKDLEGEKRTLDISEEIKEHQKETGEEKKEAPVKSVKFEQ) are compositionally biased toward basic and acidic residues. Residues 525-536 (TIPSTNPDTVLE) are compositionally biased toward polar residues. 3 stretches are compositionally biased toward basic and acidic residues: residues 537–555 (STEKVDSDLEKQDASDKTD), 580–589 (EKQGESDKID), and 610–620 (EDQKEKEGEPD). Coiled coils occupy residues 645 to 684 (RNFKDMKKTLDETKTKMKTENATKDDEIKLLREKMSLLQK) and 744 to 773 (GQIQSYDTSIEDLQAEISKLEQRRKQDGSS).

This sequence belongs to the NET family.

In terms of biological role, plant-specific actin binding protein. May be part of a membrane-cytoskeletal adapter complex. This Arabidopsis thaliana (Mouse-ear cress) protein is Protein NETWORKED 2D.